The following is a 374-amino-acid chain: DNA primase small subunit PriS (374 aa).

Residues D99, D101, and D281 contribute to the active site.

It belongs to the eukaryotic-type primase small subunit family. In terms of assembly, heterodimer of a small subunit (PriS) and a large subunit (PriL). It depends on Mg(2+) as a cofactor. Mn(2+) serves as cofactor.

Catalytic subunit of DNA primase, an RNA polymerase that catalyzes the synthesis of short RNA molecules used as primers for DNA polymerase during DNA replication. The small subunit contains the primase catalytic core and has DNA synthesis activity on its own. Binding to the large subunit stabilizes and modulates the activity, increasing the rate of DNA synthesis while decreasing the length of the DNA fragments, and conferring RNA synthesis capability. The DNA polymerase activity may enable DNA primase to also catalyze primer extension after primer synthesis. May also play a role in DNA repair. In Methanoregula boonei (strain DSM 21154 / JCM 14090 / 6A8), this protein is DNA primase small subunit PriS.